We begin with the raw amino-acid sequence, 634 residues long: ABC transporter B family member 29, chloroplastic (634 aa).

The transit peptide at 1-51 (MSFLLLTPPPCLLIPPPPLSHRRSSSLFLKHPFQPSPRPLSFCKPSALRLR) directs the protein to the chloroplast. The next 6 helical transmembrane spans lie at 75-95 (TVLL…QIVP), 119-139 (LVLA…QAFL), 195-215 (LLNT…HMIV), 219-239 (ALTL…AYLG), 307-327 (IVQV…VILA), and 330-350 (SLSS…IDPV). Residues 77 to 362 (LLGWLCSCVS…LGKAYNELKQ (286 aa)) form the ABC transmembrane type-1 domain. Residues 396 to 633 (VELCDISFKY…KDSLTSAGLV (238 aa)) form the ABC transporter domain. 430–437 (GPSGGGKT) is an ATP binding site.

The protein belongs to the ABC transporter superfamily. ABCB family. Multidrug resistance exporter (TC 3.A.1.201) subfamily.

It is found in the plastid. The protein resides in the chloroplast membrane. The sequence is that of ABC transporter B family member 29, chloroplastic (ABCB29) from Arabidopsis thaliana (Mouse-ear cress).